The primary structure comprises 64 residues: Large ribosomal subunit protein bL33 (64 aa).

Basic and acidic residues predominate over residues 16-25; it reads EARTSSEPRR. Residues 16–41 are disordered; that stretch reads EARTSSEPRRSNGVSRYTTEKNKRNT.

This sequence belongs to the bacterial ribosomal protein bL33 family.

This is Large ribosomal subunit protein bL33 from Prochlorococcus marinus subsp. pastoris (strain CCMP1986 / NIES-2087 / MED4).